A 532-amino-acid polypeptide reads, in one-letter code: ATP synthase subunit alpha (532 aa).

ATP is bound at residue Gly171–Thr178.

It belongs to the ATPase alpha/beta chains family. In terms of assembly, F-type ATPases have 2 components, CF(1) - the catalytic core - and CF(0) - the membrane proton channel. CF(1) has five subunits: alpha(3), beta(3), gamma(1), delta(1), epsilon(1). CF(0) has three main subunits: a(1), b(2) and c(9-12). The alpha and beta chains form an alternating ring which encloses part of the gamma chain. CF(1) is attached to CF(0) by a central stalk formed by the gamma and epsilon chains, while a peripheral stalk is formed by the delta and b chains.

The protein localises to the cell membrane. It carries out the reaction ATP + H2O + 4 H(+)(in) = ADP + phosphate + 5 H(+)(out). In terms of biological role, produces ATP from ADP in the presence of a proton gradient across the membrane. The alpha chain is a regulatory subunit. In Amoebophilus asiaticus (strain 5a2), this protein is ATP synthase subunit alpha.